The sequence spans 509 residues: Thymus-specific serine protease (509 aa).

The signal sequence occupies residues 1–22 (MAVKAPWLGFLLLVSLWGLSTP). Residues N69 and N171 are each glycosylated (N-linked (GlcNAc...) asparagine). The active-site Charge relay system is S184. A glycan (N-linked (GlcNAc...) asparagine) is linked at N320. Residues D446 and H471 each act as charge relay system in the active site.

It belongs to the peptidase S28 family. In terms of tissue distribution, expressed predominantly in cortical thymic epithelial cells, with highest expression around vessels and the thymic capsule.

The protein localises to the cytoplasmic vesicle. Its function is as follows. Protease that may play a role in T-cell development. The protein is Thymus-specific serine protease (Prss16) of Mus musculus (Mouse).